Reading from the N-terminus, the 1399-residue chain is DNA-directed RNA polymerase subunit beta' (1399 aa).

The Zn(2+) site is built by C70, C72, C85, and C88. Mg(2+)-binding residues include D460, D462, and D464. The Zn(2+) site is built by C814, C888, C895, and C898.

This sequence belongs to the RNA polymerase beta' chain family. In terms of assembly, the RNAP catalytic core consists of 2 alpha, 1 beta, 1 beta' and 1 omega subunit. When a sigma factor is associated with the core the holoenzyme is formed, which can initiate transcription. The cofactor is Mg(2+). It depends on Zn(2+) as a cofactor.

It carries out the reaction RNA(n) + a ribonucleoside 5'-triphosphate = RNA(n+1) + diphosphate. Its function is as follows. DNA-dependent RNA polymerase catalyzes the transcription of DNA into RNA using the four ribonucleoside triphosphates as substrates. This chain is DNA-directed RNA polymerase subunit beta', found in Pseudomonas putida (strain ATCC 47054 / DSM 6125 / CFBP 8728 / NCIMB 11950 / KT2440).